The following is a 216-amino-acid chain: 3-isopropylmalate dehydratase small subunit 1 (216 aa).

The protein belongs to the LeuD family. LeuD type 1 subfamily. Heterodimer of LeuC and LeuD.

It catalyses the reaction (2R,3S)-3-isopropylmalate = (2S)-2-isopropylmalate. Its pathway is amino-acid biosynthesis; L-leucine biosynthesis; L-leucine from 3-methyl-2-oxobutanoate: step 2/4. Functionally, catalyzes the isomerization between 2-isopropylmalate and 3-isopropylmalate, via the formation of 2-isopropylmaleate. In Bordetella bronchiseptica (strain ATCC BAA-588 / NCTC 13252 / RB50) (Alcaligenes bronchisepticus), this protein is 3-isopropylmalate dehydratase small subunit 1.